Consider the following 352-residue polypeptide: Sphingosine 1-phosphate receptor 2 (352 aa).

Topologically, residues 1–34 (MGGLYSEYLNPEKVLEHYNYTKETLDMQETTSRK) are extracellular. A glycan (N-linked (GlcNAc...) asparagine) is linked at Asn19. The chain crosses the membrane as a helical span at residues 35–59 (VASAFIIILCCAIVVENLLVLIAVA). Residues 60 to 66 (RNSKFHS) lie on the Cytoplasmic side of the membrane. A helical transmembrane segment spans residues 67-95 (AMYLFLGNLAASDLLAGVAFVANTLLSGH). Residues 96-109 (VTLSLTPVQWFARE) are Extracellular-facing. A helical membrane pass occupies residues 110–128 (GSAFITLSASVFSLLAIAI). Residues 129 to 147 (ERQVALAKVKLYGSDKSCR) are Cytoplasmic-facing. The helical transmembrane segment at 148 to 173 (MLMLIGASWLISLILGGLPILGWNCL) threads the bilayer. The Extracellular portion of the chain corresponds to 174–189 (NQLEACSTVLPLYAKH). A helical transmembrane segment spans residues 190–210 (YVLCVVTIFSVILLAIVALYV). At 211 to 233 (RIYFVVRSSHADVAGPQTLALLK) the chain is on the cytoplasmic side. Residues 234 to 255 (TVTIVLGVFIICWLPAFSILLL) traverse the membrane as a helical segment. At 256-271 (DSTCPVRACPVLYKAH) the chain is on the extracellular side. A helical membrane pass occupies residues 272-292 (YFFAFATLNSLLNPVIYTWRS). Over 293–352 (RDLRREVLRPLQCWRRGKGVTGRRGGNPGHRLLPLRSSSSLERGMHMPTSPTFLEGNTVV) the chain is Cytoplasmic. Cys305 is lipidated: S-palmitoyl cysteine. Positions 333–352 (LERGMHMPTSPTFLEGNTVV) are disordered.

It belongs to the G-protein coupled receptor 1 family. As to expression, most abundant in heart and lung; low, but clearly observed in kidney, liver and thymus; much lower but detectable in brain, testis, stomach and intestine. Not significantly detected in any of the sections of embryonic day (E) 14-18, except in embryonic brain.

It is found in the cell membrane. In terms of biological role, receptor for the lysosphingolipid sphingosine 1-phosphate (S1P). S1P is a bioactive lysophospholipid that elicits diverse physiological effects on most types of cells and tissues. Receptor for the chemokine-like protein FAM19A5. Mediates the inhibitory effect of FAM19A5 on vascular smooth muscle cell proliferation and migration. In lymphoid follicles, couples the binding of S1P to the activation of GNA13 and downstream inhibition of AKT activation leading to suppression of germinal center (GC) B cell growth and migration outside the GC niche. The chain is Sphingosine 1-phosphate receptor 2 (S1pr2) from Mus musculus (Mouse).